The sequence spans 231 residues: DNA mismatch repair protein MutH (231 aa).

This sequence belongs to the MutH family.

It is found in the cytoplasm. Functionally, sequence-specific endonuclease that cleaves unmethylated GATC sequences. It is involved in DNA mismatch repair. The protein is DNA mismatch repair protein MutH of Pectobacterium atrosepticum (strain SCRI 1043 / ATCC BAA-672) (Erwinia carotovora subsp. atroseptica).